Here is a 29-residue protein sequence, read N- to C-terminus: Cytochrome b6-f complex subunit 8 (29 aa).

Residues 3–23 traverse the membrane as a helical segment; it reads ILSLGWAALMTMFTFSLALTV.

Belongs to the PetN family. In terms of assembly, the 4 large subunits of the cytochrome b6-f complex are cytochrome b6, subunit IV (17 kDa polypeptide, PetD), cytochrome f and the Rieske protein, while the 4 small subunits are PetG, PetL, PetM and PetN. The complex functions as a dimer.

It localises to the plastid. The protein resides in the chloroplast thylakoid membrane. Component of the cytochrome b6-f complex, which mediates electron transfer between photosystem II (PSII) and photosystem I (PSI), cyclic electron flow around PSI, and state transitions. The protein is Cytochrome b6-f complex subunit 8 of Phaeodactylum tricornutum (strain CCAP 1055/1).